Here is a 332-residue protein sequence, read N- to C-terminus: Glycerol-3-phosphate dehydrogenase [NAD(P)+] (332 aa).

Residues Trp13, Lys34, and Lys108 each contribute to the NADPH site. The sn-glycerol 3-phosphate site is built by Lys108, Gly136, and Ser138. Residue Ala140 participates in NADPH binding. Residues Lys191, Asp244, Ser254, Arg255, and Asn256 each contribute to the sn-glycerol 3-phosphate site. Lys191 functions as the Proton acceptor in the catalytic mechanism. Residue Arg255 coordinates NADPH. NADPH is bound by residues Val279 and Glu281.

It belongs to the NAD-dependent glycerol-3-phosphate dehydrogenase family.

It localises to the cytoplasm. It carries out the reaction sn-glycerol 3-phosphate + NAD(+) = dihydroxyacetone phosphate + NADH + H(+). The enzyme catalyses sn-glycerol 3-phosphate + NADP(+) = dihydroxyacetone phosphate + NADPH + H(+). Its pathway is membrane lipid metabolism; glycerophospholipid metabolism. Catalyzes the reduction of the glycolytic intermediate dihydroxyacetone phosphate (DHAP) to sn-glycerol 3-phosphate (G3P), the key precursor for phospholipid synthesis. The protein is Glycerol-3-phosphate dehydrogenase [NAD(P)+] of Francisella philomiragia subsp. philomiragia (strain ATCC 25017 / CCUG 19701 / FSC 153 / O#319-036).